The following is a 211-amino-acid chain: Thioredoxin domain-containing protein 9 homolog (211 aa).

Positions 68–178 (YSEIHSEKDF…LEERIARAQV (111 aa)) constitute a Thioredoxin domain. Positions 184 to 203 (ESSSLKPKSTTQVRRNVRQS) are enriched in polar residues. Positions 184-211 (ESSSLKPKSTTQVRRNVRQSARSDSDSE) are disordered.

The chain is Thioredoxin domain-containing protein 9 homolog from Arabidopsis thaliana (Mouse-ear cress).